The primary structure comprises 418 residues: CinA-like protein (418 aa).

The protein belongs to the CinA family.

The polypeptide is CinA-like protein (Leptospira interrogans serogroup Icterohaemorrhagiae serovar copenhageni (strain Fiocruz L1-130)).